Here is a 396-residue protein sequence, read N- to C-terminus: Adenosine 3'-phospho 5'-phosphosulfate transporter 2 (396 aa).

Positions 22-42 (NGGESAGNSPPSQRKSSTSES) are disordered. The span at 27–42 (AGNSPPSQRKSSTSES) shows a compositional bias: polar residues. 2 positions are modified to phosphoserine: Ser37 and Ser40. Asn57 carries N-linked (GlcNAc...) asparagine glycosylation. The next 10 helical transmembrane spans lie at 66-86 (CAGV…IFTV), 91-111 (PYGW…GLVE), 140-160 (LILA…LGYL), 163-183 (PTQV…SILI), 189-209 (GLLD…FTLA), 216-236 (NFNL…AAIG), 253-273 (VVFY…LVTG), 290-310 (FGYG…VLAL), 318-338 (IAAT…FVLF), and 342-362 (FTLQ…LNVY).

Belongs to the nucleotide-sugar transporter family. SLC35B subfamily.

It is found in the golgi apparatus membrane. Mediates the transport of adenosine 3'-phospho 5'-phosphosulfate (PAPS), from cytosol into Golgi. PAPS is a universal sulfuryl donor for sulfation events that take place in the Golgi. Essential for viability. Involved in glycosaminoglycan synthesis and the subsequent signaling. May be involved in hh and dpp signaling by controlling the sulfation of heparan sulfate (HS). The sequence is that of Adenosine 3'-phospho 5'-phosphosulfate transporter 2 (Papst2) from Drosophila melanogaster (Fruit fly).